We begin with the raw amino-acid sequence, 187 residues long: Adenine phosphoribosyltransferase (187 aa).

Belongs to the purine/pyrimidine phosphoribosyltransferase family. As to quaternary structure, homodimer.

The protein localises to the cytoplasm. The catalysed reaction is AMP + diphosphate = 5-phospho-alpha-D-ribose 1-diphosphate + adenine. Its pathway is purine metabolism; AMP biosynthesis via salvage pathway; AMP from adenine: step 1/1. Catalyzes a salvage reaction resulting in the formation of AMP, that is energically less costly than de novo synthesis. This is Adenine phosphoribosyltransferase from Yersinia pseudotuberculosis serotype O:3 (strain YPIII).